Reading from the N-terminus, the 363-residue chain is tRNA dimethylallyltransferase (363 aa).

The tract at residues 1-55 (MLACNDDTSLYLLVKQVTKKEIYSNDLENGNVKRGASMQSLYLIGDPKCCRNNSS) is unknown insert. 65–72 (GPTASGKS) provides a ligand contact to ATP. Substrate is bound at residue 67 to 72 (TASGKS). Interaction with substrate tRNA regions lie at residues 90 to 93 (DSMQ) and 214 to 218 (QRLIR).

Belongs to the IPP transferase family. Monomer. Requires Mg(2+) as cofactor.

It catalyses the reaction adenosine(37) in tRNA + dimethylallyl diphosphate = N(6)-dimethylallyladenosine(37) in tRNA + diphosphate. Functionally, catalyzes the transfer of a dimethylallyl group onto the adenine at position 37 in tRNAs that read codons beginning with uridine, leading to the formation of N6-(dimethylallyl)adenosine (i(6)A). This chain is tRNA dimethylallyltransferase, found in Rickettsia conorii (strain ATCC VR-613 / Malish 7).